Reading from the N-terminus, the 659-residue chain is MRVTLSTLDTCESSFTPLVVIELAQDVKDETKEWLKNRIIAKKKDGGAQLLFRPLLNKYEKETLENQNLYLVGASNVRLLLGAEAVGLVKECTDAAMRAFTYGTRHNFKGFHDNNNDFLTMAECQFIIKHELENLRARDEKMIPGYPQAKLYPGKSLMRRLLTSGIVTQVFPLHDTEALKKLEDTWYTRFALKYQPIDSIRSYFGETIALYFGFLEYFTFALIPMAIIGLPYYLFVWEDYDKYVIFASFNLIWSTVILEVWKRGCANMTYRWGTLVMKRQFEEPRPGFHGVLGINSVTGREEPLYSSYKRQLRIYLVSLPFVCLCLYFSLYVMMIYFDMEDWALSLHEDSGSEWTSLLLYVPSIVYAVVIEIMNRLYRYAAEFLTSWENHRLESAYQNHLVLKVLVFNFLNCFASLFYIAFVLKDMKLLRQSLATLLITSQILNQVVESLLPYWLQRKYCARVKRKVQALKSEVDTTLYEQVLLEKEMGTYLGTFDDYLELFLQFGYVSLFSCVYPLAAAFAVLNNFTEVNSDALKMCRVFKRPFAEPSASIGVWQLAFETMSVISVVTNCALIGMSPQVNAVFPESKTDLVLIVVAVEHALLALKFILAFAIPDKPRHIQQKLARLEFESLEALKQQQMKLVAENLKEEYQEDGKEAT.

At 1–207 the chain is on the cytoplasmic side; sequence MRVTLSTLDT…DSIRSYFGET (207 aa). A helical membrane pass occupies residues 208 to 228; that stretch reads IALYFGFLEYFTFALIPMAII. At 229–240 the chain is on the extracellular side; it reads GLPYYLFVWEDY. The chain crosses the membrane as a helical span at residues 241-261; the sequence is DKYVIFASFNLIWSTVILEVW. The Cytoplasmic portion of the chain corresponds to 262–316; it reads KRGCANMTYRWGTLVMKRQFEEPRPGFHGVLGINSVTGREEPLYSSYKRQLRIYL. Residues 317–337 traverse the membrane as a helical segment; it reads VSLPFVCLCLYFSLYVMMIYF. The Extracellular segment spans residues 338 to 352; it reads DMEDWALSLHEDSGS. A helical membrane pass occupies residues 353-373; the sequence is EWTSLLLYVPSIVYAVVIEIM. The Cytoplasmic portion of the chain corresponds to 374 to 400; that stretch reads NRLYRYAAEFLTSWENHRLESAYQNHL. Residues 401–421 traverse the membrane as a helical segment; the sequence is VLKVLVFNFLNCFASLFYIAF. At 422–500 the chain is on the extracellular side; the sequence is VLKDMKLLRQ…YLGTFDDYLE (79 aa). The helical transmembrane segment at 501–521 threads the bilayer; sequence LFLQFGYVSLFSCVYPLAAAF. Over 522–553 the chain is Cytoplasmic; it reads AVLNNFTEVNSDALKMCRVFKRPFAEPSASIG. The helical transmembrane segment at 554 to 574 threads the bilayer; that stretch reads VWQLAFETMSVISVVTNCALI. The Extracellular segment spans residues 575-590; the sequence is GMSPQVNAVFPESKTD. Residues 591–611 form a helical membrane-spanning segment; sequence LVLIVVAVEHALLALKFILAF. At 612–659 the chain is on the cytoplasmic side; sequence AIPDKPRHIQQKLARLEFESLEALKQQQMKLVAENLKEEYQEDGKEAT.

The protein belongs to the anoctamin family. As to expression, predominant expression seen in epithelial tissues.

Its subcellular location is the cell membrane. Does not exhibit calcium-activated chloride channel (CaCC) activity. Can inhibit the activity of ANO1. The chain is Anoctamin-10 (Ano10) from Mus musculus (Mouse).